Here is a 255-residue protein sequence, read N- to C-terminus: Probable transcriptional regulatory protein CMM_1817 (255 aa).

Belongs to the TACO1 family.

The protein resides in the cytoplasm. This chain is Probable transcriptional regulatory protein CMM_1817, found in Clavibacter michiganensis subsp. michiganensis (strain NCPPB 382).